A 263-amino-acid polypeptide reads, in one-letter code: Small ribosomal subunit protein uS2 (263 aa).

An N-acetylserine modification is found at S2. The span at 213-223 shows a compositional bias: low complexity; the sequence is NAAEEARAGAT. A disordered region spans residues 213 to 245; that stretch reads NAAEEARAGATEETEEVVAEAETEWNTETNVED. Residues 224 to 245 show a composition bias toward acidic residues; the sequence is EETEEVVAEAETEWNTETNVED.

Belongs to the universal ribosomal protein uS2 family. As to quaternary structure, component of the small ribosomal subunit. Mature ribosomes consist of a small (40S) and a large (60S) subunit. The 40S subunit contains about 33 different proteins and 1 molecule of RNA (18S). The 60S subunit contains about 49 different proteins and 3 molecules of RNA (25S, 5.8S and 5S). Interacts with RPS21.

It localises to the cytoplasm. In terms of biological role, required for the assembly and/or stability of the 40S ribosomal subunit. Required for the processing of the 20S rRNA-precursor to mature 18S rRNA in a late step of the maturation of 40S ribosomal subunits. This is Small ribosomal subunit protein uS2 from Clavispora lusitaniae (strain ATCC 42720) (Yeast).